Consider the following 310-residue polypeptide: MKTLTRKLSRTAITLVLVILAFIAIFRAWVYYTESPWTRDARFSADVVAIAPDVAGLITHVNVHDNQLVQKDQVLFTIDQPRYQKALAEAEADVAYYQVLAQEKRQEAGRRNRLGVQAMSREEIDQANNVLQTVLHQLAKAQATRDLAKLDLERTVIRAPADGWVTNLNVYAGEFITRGSTAVALVKKNSFYVQAYMEETKLEGVRPGYRAEITPLGSNRVLKGTVDSVAAGVTNTSSTSDAKGMATIDSNLEWVRLAQRVPVRIRLDEQQGNLWPAGTTATVVITGKQDRDASQDSFFRKLAHRLREFG.

The chain crosses the membrane as a helical span at residues alanine 12–tyrosine 32.

It belongs to the membrane fusion protein (MFP) (TC 8.A.1) family.

It localises to the cell inner membrane. Functionally, forms an efflux pump with AaeB. The chain is p-hydroxybenzoic acid efflux pump subunit AaeA from Salmonella arizonae (strain ATCC BAA-731 / CDC346-86 / RSK2980).